A 662-amino-acid polypeptide reads, in one-letter code: Protein-arginine deiminase type-1 (662 aa).

Ca(2+) contacts are provided by asparagine 153, aspartate 155, aspartate 157, aspartate 164, aspartate 175, aspartate 178, glutamine 350, glutamate 352, lysine 363, aspartate 370, serine 371, asparagine 374, phenylalanine 408, and leucine 411. Cysteine 644 serves as the catalytic Nucleophile.

Belongs to the protein arginine deiminase family. As to quaternary structure, monomer. Ca(2+) serves as cofactor. In terms of tissue distribution, expressed only in the epidermis and uterus.

It localises to the cytoplasm. The catalysed reaction is L-arginyl-[protein] + H2O = L-citrullyl-[protein] + NH4(+). Its function is as follows. Catalyzes the deimination of arginine residues of proteins. The protein is Protein-arginine deiminase type-1 (Padi1) of Mus musculus (Mouse).